The primary structure comprises 481 residues: Endonuclease Bax1 (481 aa).

Positions 1–136 (MLPWELARFS…EKKIIKAPTI (136 aa)) are N-terminal domain (NTD). The central domain (CRD) stretch occupies residues 158–250 (YKLTVYVSSN…LKLANFKELK (93 aa)). The nuclease domain (NUS) stretch occupies residues 260-364 (DSSVEEKFYK…YKRKIDISLV (105 aa)). Residues Glu-265, Asp-297, and Glu-310 each coordinate a divalent metal cation. The interval 414–481 (PGYIFLKNYY…AIVIKDKKVN (68 aa)) is C-terminal domain (CTD).

Belongs to the Bax1 family. As to quaternary structure, homodimer in solution, forms a heterodimer with XPB2. A divalent metal cation is required as a cofactor.

In terms of biological role, a dual DNA endonuclease probably involved in nucleotide excision repair (NER). The N-terminal nuclease domain (NTD) of the XPB2-Bax1 complex cleaves on one side of a DNA bubble (which presumably mimics DNA damage), while the NUS nuclease domain cleaves the other side, respectively called 5' and 3' nuclease activities. Interaction with XPB blocks the NTD nuclease activity. Binds to and stimulates the ATPase activity (and probably also helicase activity) of XPB2. Increases affinity of XPB2 for forked DNA. Does not stimulate the DNA-dependent activity of XPB1. In an XPB2-Bax1-bubble DNA crystal (12 bp of dsDNA, a 6 base bubble and 6 bp of dsDNA) the short 6 bp arm is unwound. The 2 helicase and the ThM domains of XPB2 with the NTD and CRD domains of Bax1 encircle the DNA, forming a tunnel where the 12 bp dsDNA and the ds-ssDNA junction are located. The ThM domain is wedged between the ssDNA tails, with the 5' ssDNA contacting Bax1 and the 3' ssDNA in a channel in XPB2. The nuclease domain (NUS) of Bax1 does not contact DNA in the bubble DNA complex. The protein is Endonuclease Bax1 of Sulfurisphaera tokodaii (strain DSM 16993 / JCM 10545 / NBRC 100140 / 7) (Sulfolobus tokodaii).